A 274-amino-acid polypeptide reads, in one-letter code: Thiamine kinase (274 aa).

It belongs to the thiamine kinase family.

It carries out the reaction thiamine + ATP = thiamine phosphate + ADP + H(+). It functions in the pathway cofactor biosynthesis; thiamine diphosphate biosynthesis; thiamine phosphate from thiamine: step 1/1. Its function is as follows. Catalyzes the ATP-dependent phosphorylation of thiamine to thiamine phosphate. Is involved in thiamine salvage. The chain is Thiamine kinase from Shigella boydii serotype 4 (strain Sb227).